We begin with the raw amino-acid sequence, 351 residues long: DNA polymerase IV (351 aa).

In terms of domain architecture, UmuC spans 4–185 (IIHVDMDCFF…LPLAKIPGVG (182 aa)). Mg(2+) is bound by residues aspartate 8 and aspartate 103. The active site involves glutamate 104.

Belongs to the DNA polymerase type-Y family. Monomer. It depends on Mg(2+) as a cofactor.

The protein resides in the cytoplasm. It carries out the reaction DNA(n) + a 2'-deoxyribonucleoside 5'-triphosphate = DNA(n+1) + diphosphate. Its function is as follows. Poorly processive, error-prone DNA polymerase involved in untargeted mutagenesis. Copies undamaged DNA at stalled replication forks, which arise in vivo from mismatched or misaligned primer ends. These misaligned primers can be extended by PolIV. Exhibits no 3'-5' exonuclease (proofreading) activity. May be involved in translesional synthesis, in conjunction with the beta clamp from PolIII. The protein is DNA polymerase IV of Escherichia coli O1:K1 / APEC.